The primary structure comprises 2587 residues: Clavatol synthase claF (2587 aa).

The tract at residues 93–256 (LLSPLVVIVQ…TEVALSGRFH (164 aa)) is N-terminal acylcarrier protein transacylase domain (SAT). Cysteine 137 (nucleophile; for transacylase activity) is an active-site residue. Residue histidine 256 is the Proton donor/acceptor; for transacylase activity of the active site. A Ketosynthase family 3 (KS3) domain is found at 383 to 799 (DDQIAVIGMA…GSNASMIITQ (417 aa)). Active-site for beta-ketoacyl synthase activity residues include cysteine 548, histidine 683, and histidine 722. Positions 912–1222 (CFGGQISTYV…ESLPLLAEAT (311 aa)) are malonyl-CoA:ACP transacylase (MAT) domain. The N-terminal hotdog fold stretch occupies residues 1284-1416 (PKGLTTFIGF…GSIVFLPASD (133 aa)). Positions 1284–1595 (PKGLTTFIGF…YRLVPMDSMR (312 aa)) constitute a PKS/mFAS DH domain. Residues 1315–1593 (LTSANVALNT…ISYRLVPMDS (279 aa)) are product template (PT) domain. The segment at 1436-1595 (ASLLQGNGAD…YRLVPMDSMR (160 aa)) is C-terminal hotdog fold. Residues 1609–1635 (STAAVSSKSTPVHAPTPTTTVSSTPSS) form a disordered region. Residues 1617–1635 (STPVHAPTPTTTVSSTPSS) show a composition bias toward low complexity. The Carrier domain maps to 1654–1728 (PDISAKMCEI…SLVSCIRSTL (75 aa)). The residue at position 1688 (serine 1688) is an O-(pantetheine 4'-phosphoryl)serine. Residues tyrosine 1947, histidine 2059, and glutamate 2085 each act as for methyltransferase activity in the active site. The tract at residues 1952–2126 (VNTVWIKQLE…ATYWEKVLQS (175 aa)) is methyltransferase (CMeT) domain. The NADPH-binding (R) domain stretch occupies residues 2208-2452 (SLSSGQCVLV…KILPELDGTL (245 aa)).

It depends on pantetheine 4'-phosphate as a cofactor.

It catalyses the reaction 3 malonyl-CoA + acetyl-CoA + AH2 + 2 S-adenosyl-L-methionine + H(+) = clavatol + A + 2 S-adenosyl-L-homocysteine + 3 CO2 + 4 CoA + H2O. The protein operates within secondary metabolite biosynthesis. Functionally, non-reducing polyketide synthase; part of the cla gene cluster that produces clavatol and ortho-quinone methide. The clavatol biosynthesis cluster cla and the terrestric acid cluster tra are both involved in the production of peniphenones and penilactones. The non-reducing PKS claF is responsible for the formation of clavatol from successive condensations of 3 malonyl-CoA units, presumably with a simple acetyl-CoA starter unit, and 2 methylation steps. The esterase claE probably collaborates with claF by catalyzing the hydrolysis of ACP-bound acyl intermediates to free the ACP from stalled intermediates. The clavatol oxidase claD then converts clavatol to hydroxyclavatol. Spontaneous dehydration of hydroxyclavatol leads to the accumulation of the highly active ortho-quinone methide. On the other hand, the PKS-NRPS hybrid traA is involved in the formation of crustosic acid, with the help of traB and traD. The polyketide synthase module (PKS) of traA is responsible for the synthesis of the polyketide backbone via the condensation of an acetyl-CoA starter unit with 3 malonyl-CoA units. The downstream nonribosomal peptide synthetase (NRPS) module then amidates the carboxyl end of the polyketide with L-malic acid. Because traA lacks a designated enoylreductase (ER) domain, the required activity is provided the enoyl reductase traG. Crustosic acid undergoes decarboxylation and isomerization to the terrestric acid, catalyzed by the 2-oxoglutarate-dependent dioxygenase traH. Both acids are further converted to the 2 gamma-butyrolactones (R)-5-methyltetronic acid and (S)-5-carboxylmethyltetronic acid, with involvement of the cytochrome P450 monooxygenase claJ. Spontaneous addition of the methide to these gamma-butyrolactones leads to peniphenone D and penilactone D, which undergo again stereospecific attacking by methide to give penilactones A and B. The chain is Clavatol synthase claF from Penicillium crustosum (Blue mold fungus).